Here is a 516-residue protein sequence, read N- to C-terminus: GMP synthase [glutamine-hydrolyzing] (516 aa).

In terms of domain architecture, Glutamine amidotransferase type-1 spans 8–198; sequence KILILDFGSQ…VVNICGCDTL (191 aa). The active-site Nucleophile is the cysteine 84. Residues histidine 172 and glutamate 174 contribute to the active site. Positions 199 to 391 constitute a GMPS ATP-PPase domain; that stretch reads WNIENIIEND…LGLPYNMLYR (193 aa). An ATP-binding site is contributed by 226–232; it reads SGGVDSS.

In terms of assembly, homodimer.

The catalysed reaction is XMP + L-glutamine + ATP + H2O = GMP + L-glutamate + AMP + diphosphate + 2 H(+). It functions in the pathway purine metabolism; GMP biosynthesis; GMP from XMP (L-Gln route): step 1/1. Its function is as follows. Catalyzes the synthesis of GMP from XMP. The protein is GMP synthase [glutamine-hydrolyzing] of Francisella tularensis subsp. holarctica (strain FTNF002-00 / FTA).